The sequence spans 218 residues: Dual specificity protein phosphatase TpbA (218 aa).

The N-terminal stretch at 1–28 (MHRSPLAWLRLLLAAVLGAFLLGGPLHA) is a signal peptide. Residues 44–188 (DPSINLYRMS…YVRGADVDGL (145 aa)) form the Tyrosine-protein phosphatase domain. The Proton donor/acceptor role is filled by D105. The Phosphocysteine intermediate role is filled by C132.

The protein belongs to the protein-tyrosine phosphatase family.

The protein resides in the periplasm. It carries out the reaction O-phospho-L-tyrosyl-[protein] + H2O = L-tyrosyl-[protein] + phosphate. The enzyme catalyses O-phospho-L-threonyl-[protein] + H2O = L-threonyl-[protein] + phosphate. It catalyses the reaction O-phospho-L-seryl-[protein] + H2O = L-seryl-[protein] + phosphate. Functionally, phosphatase that regulates diverse phenotypes in P.aeruginosa via regulation of the concentration of cellular c-di-GMP. Acts by dephosphorylating the membrane-anchored diguanylate cyclase TpbB at tyrosine and serine/threonine sites, leading to inactivation of TpbB and reduced c-di-GMP production. In vitro shows phosphatase activity toward p-nitrophenyl phosphate (pNPP) and tyrosine phosphopeptides. Can efficiently dephosphorylate two phosphorylated peptides derived from the periplasmic domain of TpbB, with a strong preference for Tyr-48 over Tyr-62. The protein is Dual specificity protein phosphatase TpbA of Pseudomonas aeruginosa (strain ATCC 15692 / DSM 22644 / CIP 104116 / JCM 14847 / LMG 12228 / 1C / PRS 101 / PAO1).